The chain runs to 130 residues: Small ribosomal subunit protein uS8 (130 aa).

The protein belongs to the universal ribosomal protein uS8 family. In terms of assembly, part of the 30S ribosomal subunit. Contacts proteins S5 and S12.

In terms of biological role, one of the primary rRNA binding proteins, it binds directly to 16S rRNA central domain where it helps coordinate assembly of the platform of the 30S subunit. This is Small ribosomal subunit protein uS8 from Erwinia tasmaniensis (strain DSM 17950 / CFBP 7177 / CIP 109463 / NCPPB 4357 / Et1/99).